A 417-amino-acid chain; its full sequence is NADH-quinone oxidoreductase subunit D (417 aa).

This sequence belongs to the complex I 49 kDa subunit family. As to quaternary structure, NDH-1 is composed of 14 different subunits. Subunits NuoB, C, D, E, F, and G constitute the peripheral sector of the complex.

It is found in the cell inner membrane. It catalyses the reaction a quinone + NADH + 5 H(+)(in) = a quinol + NAD(+) + 4 H(+)(out). NDH-1 shuttles electrons from NADH, via FMN and iron-sulfur (Fe-S) centers, to quinones in the respiratory chain. The immediate electron acceptor for the enzyme in this species is believed to be ubiquinone. Couples the redox reaction to proton translocation (for every two electrons transferred, four hydrogen ions are translocated across the cytoplasmic membrane), and thus conserves the redox energy in a proton gradient. This Burkholderia ambifaria (strain ATCC BAA-244 / DSM 16087 / CCUG 44356 / LMG 19182 / AMMD) (Burkholderia cepacia (strain AMMD)) protein is NADH-quinone oxidoreductase subunit D.